Here is a 158-residue protein sequence, read N- to C-terminus: Sporulation-delaying protein SdpA (158 aa).

It is found in the cytoplasm. Its function is as follows. Required for the maturation of SdpC to SDP. Not required for SdpC signal peptide cleavage, secretion from the cell or disulfide bond formation. The protein is Sporulation-delaying protein SdpA of Bacillus subtilis (strain 168).